Reading from the N-terminus, the 286-residue chain is L-cysteine S-thiosulfotransferase subunit SoxA (286 aa).

Positions 1–27 (MKKTIQRGLFTGALVLMTAMTAKPANA) are cleaved as a signal peptide. A disulfide bridge connects residues Cys-106 and Cys-137. A Cytochrome c domain is found at 180–286 (DAYMKGKKFF…LKYNGPASRK (107 aa)). Residues Cys-200 and His-204 each contribute to the heme site. Arg-243 serves as a coordination point for substrate. Cys-247 lines the heme pocket. The active-site Cysteine persulfide intermediate is Cys-247.

The protein belongs to the SoxA family. In terms of assembly, heterodimer of SoxA and SoxX. The SoxAX complex interacts with CT1020, SoxAX-binding protein SaxB (SoxK); this interaction seems to be between SoxA and CT1020 and stimulates catalytic activity of the SoxAX complex. Heme is required as a cofactor. Post-translationally, cysteine persulfide at Cys-247.

The protein resides in the periplasm. It carries out the reaction L-cysteinyl-[SoxY protein] + thiosulfate + 2 Fe(III)-[cytochrome c] = S-sulfosulfanyl-L-cysteinyl-[SoxY protein] + 2 Fe(II)-[cytochrome c] + 2 H(+). The enzyme catalyses S-sulfanyl-L-cysteinyl-[SoxY protein] + thiosulfate + 2 Fe(III)-[cytochrome c] = S-(2-sulfodisulfanyl)-L-cysteinyl-[SoxY protein] + 2 Fe(II)-[cytochrome c] + 2 H(+). In terms of biological role, C-type monoheme cytochrome, which is part of the SoxAX cytochrome complex involved in sulfur oxidation. The SoxAX complex catalyzes the formation of a heterodisulfide bond between the conserved cysteine residue on a sulfur carrier SoxYZ complex subunit SoxY and thiosulfate or other inorganic sulfur substrates. This leads to the liberation of two electrons, which may be transferred from the SoxAX complex to another cytochrome c and which then may be used for reductive CO(2) fixation. The chain is L-cysteine S-thiosulfotransferase subunit SoxA from Chlorobaculum tepidum (strain ATCC 49652 / DSM 12025 / NBRC 103806 / TLS) (Chlorobium tepidum).